A 629-amino-acid chain; its full sequence is tRNA uridine 5-carboxymethylaminomethyl modification enzyme MnmG (629 aa).

FAD is bound by residues glycine 13–glycine 18, valine 125, and serine 180. An NAD(+)-binding site is contributed by glycine 273–phenylalanine 287. FAD is bound at residue glutamine 370.

This sequence belongs to the MnmG family. Homodimer. Heterotetramer of two MnmE and two MnmG subunits. FAD serves as cofactor.

The protein resides in the cytoplasm. NAD-binding protein involved in the addition of a carboxymethylaminomethyl (cmnm) group at the wobble position (U34) of certain tRNAs, forming tRNA-cmnm(5)s(2)U34. The polypeptide is tRNA uridine 5-carboxymethylaminomethyl modification enzyme MnmG (Escherichia coli O45:K1 (strain S88 / ExPEC)).